The following is a 448-amino-acid chain: Asparagine--tRNA ligase (448 aa).

This sequence belongs to the class-II aminoacyl-tRNA synthetase family. Homodimer.

The protein resides in the cytoplasm. The enzyme catalyses tRNA(Asn) + L-asparagine + ATP = L-asparaginyl-tRNA(Asn) + AMP + diphosphate + H(+). In Streptococcus thermophilus (strain ATCC BAA-491 / LMD-9), this protein is Asparagine--tRNA ligase.